The chain runs to 112 residues: Conotoxin vil14.4 (112 aa).

A signal peptide spans 1–22 (MGFRVLVLVVMATTSALPFTFF). Residues 23–85 (EEPGRSPFRP…FAELSVGQRR (63 aa)) constitute a propeptide that is removed on maturation. Disulfide bonds link C91/C111 and C95/C107.

The protein belongs to the conotoxin R superfamily. Expressed by the venom duct.

Its subcellular location is the secreted. This chain is Conotoxin vil14.4, found in Conus villepinii (Villepin's cone).